Consider the following 276-residue polypeptide: Release factor glutamine methyltransferase (276 aa).

S-adenosyl-L-methionine contacts are provided by residues 116–120 (GTGTG), Asp-139, Trp-167, and Asn-182. 182–185 (NPPY) lines the substrate pocket.

This sequence belongs to the protein N5-glutamine methyltransferase family. PrmC subfamily.

The catalysed reaction is L-glutaminyl-[peptide chain release factor] + S-adenosyl-L-methionine = N(5)-methyl-L-glutaminyl-[peptide chain release factor] + S-adenosyl-L-homocysteine + H(+). In terms of biological role, methylates the class 1 translation termination release factors RF1/PrfA and RF2/PrfB on the glutamine residue of the universally conserved GGQ motif. The chain is Release factor glutamine methyltransferase from Pseudomonas aeruginosa (strain ATCC 15692 / DSM 22644 / CIP 104116 / JCM 14847 / LMG 12228 / 1C / PRS 101 / PAO1).